The chain runs to 1219 residues: A disintegrin and metalloproteinase with thrombospondin motifs 18 (1219 aa).

An N-terminal signal peptide occupies residues 1–47 (MECALLCLCALRAAGPGPPWGPAGLGRLAKALQLCCFCCASVAVALA). Residues 48 to 284 (SDSGSSGGSG…EYGGTGRPRR (237 aa)) constitute a propeptide that is removed on maturation. N-linked (GlcNAc...) asparagine glycans are attached at residues N151 and N190. Residues 217-248 (YPGSQRTYPGHSPSHTPPASQSQEPEYSHRRW) form a disordered region. Over residues 218–241 (PGSQRTYPGHSPSHTPPASQSQEP) the composition is skewed to polar residues. Residues 293-498 (LNVETLVVAD…PQAGCLVDEP (206 aa)) form the Peptidase M12B domain. Cystine bridges form between C369-C420, C395-C402, C414-C493, C453-C477, C521-C546, C532-C553, C541-C572, C566-C577, C601-C638, C605-C643, and C616-C628. Position 436 (H436) interacts with Zn(2+). Residue E437 is part of the active site. Residues H440 and H446 each contribute to the Zn(2+) site. The 56-residue stretch at 589 to 644 (HGQWSAWSKWSECSRTCGGGVKFQERHCSNPKPQYGGKYCPGSSRIYKLCNINPCP) folds into the TSP type-1 1 domain. N-linked (GlcNAc...) asparagine glycosylation is found at N745, N838, N865, and N909. 4 consecutive TSP type-1 domains span residues 931 to 990 (CPAY…NSHA), 991 to 1049 (CPPE…GRCP), 1052 to 1116 (NRLQ…RTCP), and 1121 to 1176 (AVAS…NFCP). The PLAC domain occupies 1182–1219 (DDPSCVDFFSWCHLVPQHGVCNHKFYGKQCCRSCTRKS).

It depends on Zn(2+) as a cofactor. Post-translationally, the precursor is cleaved by a furin endopeptidase. Glycosylated. Can be O-fucosylated by POFUT2 on a serine or a threonine residue found within the consensus sequence C1-X(2)-(S/T)-C2-G of the TSP type-1 repeat domains where C1 and C2 are the first and second cysteine residue of the repeat, respectively. Fucosylated repeats can then be further glycosylated by the addition of a beta-1,3-glucose residue by the glucosyltransferase, B3GALTL. Fucosylation mediates the efficient secretion of ADAMTS family members. Can also be C-glycosylated with one or two mannose molecules on tryptophan residues within the consensus sequence W-X-X-W of the TPRs, and N-glycosylated. These other glycosylations can also facilitate secretion.

It localises to the secreted. The protein localises to the extracellular space. The protein resides in the extracellular matrix. The sequence is that of A disintegrin and metalloproteinase with thrombospondin motifs 18 (Adamts18) from Mus musculus (Mouse).